The sequence spans 37 residues: Cytochrome b6-f complex subunit 5 (37 aa).

Residues 5–25 traverse the membrane as a helical segment; it reads LLSGIVLGLIPITLAGLFVTA.

The protein belongs to the PetG family. In terms of assembly, the 4 large subunits of the cytochrome b6-f complex are cytochrome b6, subunit IV (17 kDa polypeptide, PetD), cytochrome f and the Rieske protein, while the 4 small subunits are PetG, PetL, PetM and PetN. The complex functions as a dimer.

It localises to the plastid. The protein localises to the chloroplast thylakoid membrane. Component of the cytochrome b6-f complex, which mediates electron transfer between photosystem II (PSII) and photosystem I (PSI), cyclic electron flow around PSI, and state transitions. PetG is required for either the stability or assembly of the cytochrome b6-f complex. This chain is Cytochrome b6-f complex subunit 5, found in Angiopteris evecta (Mule's foot fern).